A 197-amino-acid chain; its full sequence is Outer membrane protein 26 (197 aa).

The signal sequence occupies residues 1-23; it reads MKNIAKVTALALGIALASGYASA.

The protein belongs to the Skp family.

It is found in the cell outer membrane. This is Outer membrane protein 26 (omp26) from Haemophilus influenzae (strain ATCC 51907 / DSM 11121 / KW20 / Rd).